We begin with the raw amino-acid sequence, 435 residues long: UPF0761 membrane protein mma_2179 (435 aa).

6 helical membrane-spanning segments follow: residues 45 to 65 (VLAL…FPLF), 103 to 123 (LSAF…LMID), 142 to 162 (ILVY…SMTF), 177 to 197 (VPFV…MVAF), 208 to 228 (LVEW…FEIV), and 252 to 272 (FPIF…GAVV).

This sequence belongs to the UPF0761 family.

It localises to the cell inner membrane. The sequence is that of UPF0761 membrane protein mma_2179 from Janthinobacterium sp. (strain Marseille) (Minibacterium massiliensis).